Here is a 334-residue protein sequence, read N- to C-terminus: CRISPR-associated protein Cas1 3 (334 aa).

Positions 165, 230, and 245 each coordinate Mn(2+).

The protein belongs to the CRISPR-associated endonuclease Cas1 family. In terms of assembly, homodimer, forms a heterotetramer with a Cas2 homodimer. The cofactor is Mg(2+). Requires Mn(2+) as cofactor.

Its function is as follows. CRISPR (clustered regularly interspaced short palindromic repeat), is an adaptive immune system that provides protection against mobile genetic elements (viruses, transposable elements and conjugative plasmids). CRISPR clusters contain spacers, sequences complementary to antecedent mobile elements, and target invading nucleic acids. CRISPR clusters are transcribed and processed into CRISPR RNA (crRNA). Acts as a dsDNA endonuclease. Involved in the integration of spacer DNA into the CRISPR cassette. This is CRISPR-associated protein Cas1 3 from Methanobrevibacter ruminantium (strain ATCC 35063 / DSM 1093 / JCM 13430 / OCM 146 / M1) (Methanobacterium ruminantium).